The following is a 979-amino-acid chain: Zinc finger protein 280D (979 aa).

Residues K32, K34, K74, and K87 each participate in a glycyl lysine isopeptide (Lys-Gly) (interchain with G-Cter in SUMO2) cross-link. The span at 89–101 shows a compositional bias: polar residues; that stretch reads TSQHYTNPTSNPV. Residues 89–119 are disordered; the sequence is TSQHYTNPTSNPVPASPINFHPESRSSDSSV. The residue at position 104 (S104) is a Phosphoserine. Glycyl lysine isopeptide (Lys-Gly) (interchain with G-Cter in SUMO2) cross-links involve residues K126 and K140. The segment at 157–236 is disordered; the sequence is YQGGPTLSMA…TSSNQSKNGT (80 aa). The span at 169 to 187 shows a compositional bias: polar residues; the sequence is SESSFLSKRPSTSEVNNVN. Residues K189, K210, K223, K233, K275, K284, and K292 each participate in a glycyl lysine isopeptide (Lys-Gly) (interchain with G-Cter in SUMO2) cross-link. A compositionally biased stretch (polar residues) spans 195–235; sequence ESVSGANSSAVLPSVKSPSVTSSQAMLAKGTNTSSNQSKNG. 2 consecutive C2H2-type zinc fingers follow at residues 321–343 and 358–381; these read FKCFSCLKILKNNIRFMNHMKHH and TTCQHCYRQFPTPFQLQCHIESTH. The C2H2-type 3; degenerate zinc-finger motif lies at 388–412; that stretch reads TICKICELSFETEHVLLQHMKDNHK. 2 C2H2-type zinc fingers span residues 418–441 and 449–469; these read YVCQVCNYRSSSFSDVETHFRTSH and CPFCLKVIKIATPYMHHYMKH. Disordered regions lie at residues 523–608, 739–809, and 896–979; these read GPLQ…NKKS, LKKE…SDKE, and FLRK…KERS. Over residues 527–541 the composition is skewed to low complexity; it reads SGASPTPSISASAST. Polar residues-rich tracts occupy residues 542 to 584 and 592 to 608; these read LQLS…NGSK and SNMQKKQSTLASSNKKS. At S545 the chain carries Phosphoserine. K550 participates in a covalent cross-link: Glycyl lysine isopeptide (Lys-Gly) (interchain with G-Cter in SUMO2). The segment covering 739 to 784 has biased composition (basic and acidic residues); sequence LKKEAPAKEQEPVSKEIARPNMAERETETSNSESKQDKAASSKEKN. A Glycyl lysine isopeptide (Lys-Gly) (interchain with G-Cter in SUMO2) cross-link involves residue K740. Residues 786–797 show a composition bias toward polar residues; it reads CNANSFEGSSTT. A compositionally biased stretch (basic and acidic residues) spans 798–809; it reads KSEESITVSDKE. Residues 905–914 show a composition bias toward polar residues; it reads SVSSDVSEQG. S908 and S911 each carry phosphoserine. Residues 970–979 show a composition bias toward acidic residues; sequence VDLEDEKERS. K976 participates in a covalent cross-link: Glycyl lysine isopeptide (Lys-Gly) (interchain with G-Cter in SUMO2).

The protein localises to the nucleus. May function as a transcription factor. The chain is Zinc finger protein 280D (ZNF280D) from Homo sapiens (Human).